The following is a 572-amino-acid chain: Hsp70-Hsp90 organizing protein 1 (572 aa).

TPR repeat units follow at residues Ala2–Asn35, Val37–Trp69, and Pro70–Asn103. The STI1 1 domain maps to Gly133–Tyr172. The residue at position 167 (Ser167) is a Phosphoserine. A disordered region spans residues Lys189 to Lys248. Basic and acidic residues predominate over residues Thr232–Lys248. Residues Lys241–Lys258 carry the Bipartite nuclear localization signal motif. TPR repeat units lie at residues Ala244–Asp277, Ser279–Leu311, Ala319–Pro356, Thr358–Leu382, Gly383–Asp416, Lys418–Phe450, and Ser451–Asn484. The region spanning Asp521 to Ile560 is the STI1 2 domain.

In terms of assembly, co-chaperone that forms a complex with HSP70 and HSP90 and preproteins (e.g. chloroplast preproteins). Phosphorylated. In terms of processing, acetylated.

It is found in the cytoplasm. Its subcellular location is the nucleus. Mediates the association of the molecular chaperones HSP70 and HSP90. Mediates nuclear encoded chloroplast preproteins binding to HSP90 prior to chloroplastic sorting. The polypeptide is Hsp70-Hsp90 organizing protein 1 (HOP1) (Arabidopsis thaliana (Mouse-ear cress)).